Reading from the N-terminus, the 366-residue chain is tRNA/tmRNA (uracil-C(5))-methyltransferase (366 aa).

S-adenosyl-L-methionine contacts are provided by Gln-190, Tyr-218, Asn-223, Glu-239, and Asp-299. The active-site Nucleophile is the Cys-324. The active-site Proton acceptor is the Glu-358.

The protein belongs to the class I-like SAM-binding methyltransferase superfamily. RNA M5U methyltransferase family. TrmA subfamily.

The enzyme catalyses uridine(54) in tRNA + S-adenosyl-L-methionine = 5-methyluridine(54) in tRNA + S-adenosyl-L-homocysteine + H(+). The catalysed reaction is uridine(341) in tmRNA + S-adenosyl-L-methionine = 5-methyluridine(341) in tmRNA + S-adenosyl-L-homocysteine + H(+). In terms of biological role, dual-specificity methyltransferase that catalyzes the formation of 5-methyluridine at position 54 (m5U54) in all tRNAs, and that of position 341 (m5U341) in tmRNA (transfer-mRNA). The protein is tRNA/tmRNA (uracil-C(5))-methyltransferase of Escherichia coli O157:H7 (strain EC4115 / EHEC).